We begin with the raw amino-acid sequence, 146 residues long: Hemoglobin subunit beta-2 (146 aa).

In terms of domain architecture, Globin spans 2–146; that stretch reads EWTDFERATI…VVSALGRQYH (145 aa). H63 and H92 together coordinate heme b.

It belongs to the globin family. As to quaternary structure, hb3 is a heterotetramer of two alpha-2 chains and two beta-2 chains. Red blood cells.

Involved in oxygen transport from gills to the various peripheral tissues. This is Hemoglobin subunit beta-2 (hbb2) from Anarhichas minor (Arctic spotted wolffish).